The following is a 265-amino-acid chain: ATP synthase subunit a (265 aa).

The next 6 helical transmembrane spans lie at 26–46 (VHLD…FFFY), 88–108 (IGSL…IDLI), 132–152 (DISA…FYTI), 168–188 (PFNH…TLLA), 195–217 (FRLF…MYMA), and 231–251 (LIWA…FMML).

Belongs to the ATPase A chain family. In terms of assembly, F-type ATPases have 2 components, CF(1) - the catalytic core - and CF(0) - the membrane proton channel. CF(1) has five subunits: alpha(3), beta(3), gamma(1), delta(1), epsilon(1). CF(0) has three main subunits: a(1), b(2) and c(9-12). The alpha and beta chains form an alternating ring which encloses part of the gamma chain. CF(1) is attached to CF(0) by a central stalk formed by the gamma and epsilon chains, while a peripheral stalk is formed by the delta and b chains.

It localises to the cell inner membrane. Key component of the proton channel; it plays a direct role in the translocation of protons across the membrane. The polypeptide is ATP synthase subunit a (Histophilus somni (strain 2336) (Haemophilus somnus)).